The primary structure comprises 342 residues: N-acetyl-gamma-glutamyl-phosphate reductase (342 aa).

C149 is an active-site residue.

Belongs to the NAGSA dehydrogenase family. Type 1 subfamily.

The protein localises to the cytoplasm. The enzyme catalyses N-acetyl-L-glutamate 5-semialdehyde + phosphate + NADP(+) = N-acetyl-L-glutamyl 5-phosphate + NADPH + H(+). The protein operates within amino-acid biosynthesis; L-arginine biosynthesis; N(2)-acetyl-L-ornithine from L-glutamate: step 3/4. In terms of biological role, catalyzes the NADPH-dependent reduction of N-acetyl-5-glutamyl phosphate to yield N-acetyl-L-glutamate 5-semialdehyde. In Thiobacillus denitrificans (strain ATCC 25259 / T1), this protein is N-acetyl-gamma-glutamyl-phosphate reductase.